The primary structure comprises 51 residues: Large ribosomal subunit protein bL33 (51 aa).

This sequence belongs to the bacterial ribosomal protein bL33 family.

This Marinobacter nauticus (strain ATCC 700491 / DSM 11845 / VT8) (Marinobacter aquaeolei) protein is Large ribosomal subunit protein bL33.